The sequence spans 124 residues: Photoactive yellow protein (124 aa).

One can recognise a PAS domain in the interval 22–85; it reads AESLPFGAVL…GEFLKFNRTG (64 aa). C68 is modified (S-(4-hydroxycinnamyl)cysteine).

It belongs to the photoactive yellow protein family. Post-translationally, the 4-hydroxycinnamic acid (p-coumaric acid) chromophore is covalently bound via a thioester linkage.

Its function is as follows. This photoactive protein is a photoreceptor with kinetics similar to that of rhodopsin. The sequence is that of Photoactive yellow protein (pyp) from Rhodobacter capsulatus (strain ATCC BAA-309 / NBRC 16581 / SB1003).